We begin with the raw amino-acid sequence, 350 residues long: Protein-glutamate methylesterase/protein-glutamine glutaminase (350 aa).

The Response regulatory domain maps to 5–122 (KVLCVDDSAL…RDGLIEYSEV (118 aa)). D56 is subject to 4-aspartylphosphate. One can recognise a CheB-type methylesterase domain in the interval 152-346 (PFASSEKLVI…ERILTRLGDR (195 aa)). Catalysis depends on residues S165, H191, and D288.

This sequence belongs to the CheB family. Post-translationally, phosphorylated by CheA. Phosphorylation of the N-terminal regulatory domain activates the methylesterase activity.

It is found in the cytoplasm. It carries out the reaction [protein]-L-glutamate 5-O-methyl ester + H2O = L-glutamyl-[protein] + methanol + H(+). The enzyme catalyses L-glutaminyl-[protein] + H2O = L-glutamyl-[protein] + NH4(+). Functionally, involved in chemotaxis. Part of a chemotaxis signal transduction system that modulates chemotaxis in response to various stimuli. Catalyzes the demethylation of specific methylglutamate residues introduced into the chemoreceptors (methyl-accepting chemotaxis proteins or MCP) by CheR. Also mediates the irreversible deamidation of specific glutamine residues to glutamic acid. This is Protein-glutamate methylesterase/protein-glutamine glutaminase from Bordetella parapertussis (strain 12822 / ATCC BAA-587 / NCTC 13253).